A 413-amino-acid chain; its full sequence is Branched-chain-amino-acid aminotransferase 3, chloroplastic (413 aa).

A chloroplast-targeting transit peptide spans 1 to 60 (MERAAILPSVNQNYLLCPSRAFSTRLHSSTRNLSPPSFASIKLQHSSSSVSSNGGISLTR). An N6-(pyridoxal phosphate)lysine modification is found at lysine 259.

The protein belongs to the class-IV pyridoxal-phosphate-dependent aminotransferase family. The cofactor is pyridoxal 5'-phosphate. In terms of tissue distribution, expressed in the phloem cells.

The protein resides in the plastid. It localises to the chloroplast. The enzyme catalyses L-leucine + 2-oxoglutarate = 4-methyl-2-oxopentanoate + L-glutamate. It catalyses the reaction L-isoleucine + 2-oxoglutarate = (S)-3-methyl-2-oxopentanoate + L-glutamate. The catalysed reaction is L-valine + 2-oxoglutarate = 3-methyl-2-oxobutanoate + L-glutamate. It carries out the reaction a 2-oxocarboxylate + L-methionine = 4-methylsulfanyl-2-oxobutanoate + an L-alpha-amino acid. Its pathway is amino-acid biosynthesis; L-isoleucine biosynthesis; L-isoleucine from 2-oxobutanoate: step 4/4. It functions in the pathway amino-acid biosynthesis; L-leucine biosynthesis; L-leucine from 3-methyl-2-oxobutanoate: step 4/4. It participates in amino-acid biosynthesis; L-valine biosynthesis; L-valine from pyruvate: step 4/4. Inhibited by Ser- or Thr-derived imine. Converts 2-oxo acids to branched-chain amino acids. Acts on leucine, isoleucine and valine. Also involved in methionine chain elongation cycle of aliphatic glucosinolate formation. Catalyzes the conversion of 5-methylthiopentyl-2-oxo and 6-methylthiohexyl-2-oxo acids to their respective Met derivatives, homomethionine and dihomo-methionine, respectively. This Arabidopsis thaliana (Mouse-ear cress) protein is Branched-chain-amino-acid aminotransferase 3, chloroplastic.